The chain runs to 419 residues: O-methyltransferase desB (419 aa).

S-adenosyl-L-methionine contacts are provided by residues 255 to 256 (GG), Asp-280, 306 to 307 (DF), and Arg-323. The Proton acceptor role is filled by His-326.

The protein belongs to the class I-like SAM-binding methyltransferase superfamily. Cation-independent O-methyltransferase family. The cofactor is S-adenosyl-L-methionine.

It functions in the pathway secondary metabolite biosynthesis. Its function is as follows. Non-reducing polyketide synthase; part of the gene cluster that mediates the biosynthesis of the bicoumarin desertorin. The non-reducing polyketide synthase desS first catalyzes the formation of the pentaketidic 4,7-dihydroxy-5-methylcoumarin from acetyl coenzyme A and 4 malonyl coenzyme A molecules. Further O-methylation by desB leads to the formation of 7-demethylsiderin. Then, an oxidative phenol coupling catalyzed by the cytochrome P450 monooxygenase desC forms the 6,8'-dimer M-desertorin A via dimerization the monomeric precursor, 7-demethylsiderin. M-desertorin A is further converted to M-desertorin C. The chain is O-methyltransferase desB from Aspergillus desertorum (Emericella desertorum).